Here is an 86-residue protein sequence, read N- to C-terminus: Large ribosomal subunit protein bL27 (86 aa).

Residues 1–10 are compositionally biased toward gly residues; it reads MAQKKGGGST. The interval 1–22 is disordered; that stretch reads MAQKKGGGSTRNGRDSESKRLG.

The protein belongs to the bacterial ribosomal protein bL27 family.

The sequence is that of Large ribosomal subunit protein bL27 from Polynucleobacter asymbioticus (strain DSM 18221 / CIP 109841 / QLW-P1DMWA-1) (Polynucleobacter necessarius subsp. asymbioticus).